A 270-amino-acid polypeptide reads, in one-letter code: SPbeta prophage-derived DNA ligase-like protein LigB (270 aa).

The active-site N6-AMP-lysine intermediate is the lysine 25.

This sequence belongs to the ATP-dependent DNA ligase family.

This is SPbeta prophage-derived DNA ligase-like protein LigB (ligB) from Bacillus subtilis (strain 168).